Reading from the N-terminus, the 249-residue chain is 5'-nucleotidase SurE (249 aa).

Residues aspartate 9, aspartate 10, serine 40, and asparagine 92 each contribute to the a divalent metal cation site.

It belongs to the SurE nucleotidase family. It depends on a divalent metal cation as a cofactor.

It localises to the cytoplasm. It carries out the reaction a ribonucleoside 5'-phosphate + H2O = a ribonucleoside + phosphate. Its function is as follows. Nucleotidase that shows phosphatase activity on nucleoside 5'-monophosphates. The sequence is that of 5'-nucleotidase SurE from Shewanella oneidensis (strain ATCC 700550 / JCM 31522 / CIP 106686 / LMG 19005 / NCIMB 14063 / MR-1).